The chain runs to 245 residues: MADGFSLNDALAGSGNPNPQGWPGAWGNQPGAGGYPGASYPGAYPGQAPPGAYPGQAPPGAYPGPTAPGAYPGPAPGAYPGQPGASGAYPSAPGAYPAAGPYGAPTGALTVPYKLPLAGGVMPRMLITIMGTVKPNANRIILNFLRGNDIAFHFNPRFNENNRRVIVCNTKQDNNWGREERQSAFPFESGRPFKIQVLVEADHFKVAVNDAHLLQYNHRMKNLREINQMEISGDITLTSAAPTMI.

The disordered stretch occupies residues 1–30; the sequence is MADGFSLNDALAGSGNPNPQGWPGAWGNQP. Ala2 bears the N-acetylalanine mark. Ser6 is subject to Phosphoserine; by CK1. A run of 4 repeats spans residues 35–43, 44–52, 53–61, and 62–70. Positions 35–99 are 7 X 9 AA tandem repeats of Y-P-G-X(3)-P-[GS]-A; it reads YPGASYPGAY…PSAPGAYPAA (65 aa). Residues 47–68 form a disordered region; that stretch reads QAPPGAYPGQAPPGAYPGPTAP. A 5; approximate repeat occupies 71–78; sequence YPGPAPGA. A 6; approximate repeat occupies 79–88; the sequence is YPGQPGASGA. One copy of the 7; approximate repeat lies at 89 to 99; the sequence is YPSAPGAYPAA. Positions 113-243 constitute a Galectin domain; that stretch reads YKLPLAGGVM…DITLTSAAPT (131 aa). An a beta-D-galactoside-binding site is contributed by 176–182; that stretch reads WGREERQ. Ser183 carries the post-translational modification Phosphoserine. The Nuclear export signal signature appears at 221 to 236; sequence KNLREINQMEISGDIT.

In terms of assembly, probably forms homo- or heterodimers. Interacts with DMBT1. Interacts with CD6 and ALCAM. Forms a complex with the ITGA3, ITGB1 and CSPG4. Interacts with LGALS3BP, LYPD3, ZFTRAF1 and UACA. Interacts with TRIM16; this interaction mediates autophagy of damage endomembranes. Interacts with cargo receptor TMED10; the interaction mediates the translocation from the cytoplasm into the ERGIC (endoplasmic reticulum-Golgi intermediate compartment) and thereby secretion. Interacts with and inhibits by binding NCR3/NKp30.

The protein resides in the cytoplasm. Its subcellular location is the nucleus. It localises to the secreted. Galactose-specific lectin which binds IgE. May mediate with the alpha-3, beta-1 integrin the stimulation by CSPG4 of endothelial cells migration. Together with DMBT1, required for terminal differentiation of columnar epithelial cells during early embryogenesis. In the nucleus: acts as a pre-mRNA splicing factor. Involved in acute inflammatory responses including neutrophil activation and adhesion, chemoattraction of monocytes macrophages, opsonization of apoptotic neutrophils, and activation of mast cells. Together with TRIM16, coordinates the recognition of membrane damage with mobilization of the core autophagy regulators ATG16L1 and BECN1 in response to damaged endomembranes. When secreted, interacts with NK cell-activating receptor NCR3/NKp30 acting as an inhibitory ligand which antagonizes NK cell attack. The chain is Galectin-3 (LGALS3) from Cricetulus longicaudatus (Long-tailed dwarf hamster).